An 843-amino-acid polypeptide reads, in one-letter code: MAAYLFTCSILQTLSEAGKIEIAEDKLLHYLGELPGTPNGPVQLLENICTILEGQGRATHGNVIRHVLNIVVTEQELGGLGISGKSWEEVDEHTLHEIKFLTDAWLTAAESRAAARHLPQPLKQQDTRRLPMNLAEKILAHHAFSVPRRERVVAGDLLRVSIDWVIASELSWVGMKHSVTSLDMKPSAWRNDRFWLSGDHTVDPRTYHDKRVQALIKGLESAKRDLKMTENQGSNYTIMHTEFVRERAEPGMLVLGSDSHTCSAGAVSALAIGLGAGDVMAGLATGETWFKVPECIRINFTGQPAWYIGGKDVILSVLKQLKRNTYAAERIVEFGGAGAKLLSCDARFAISNMCTVRDPNDRPELKPTADDRSTSRNLVLLQAFLFPTVSLNRLSIAAGARYEGASYASTFEIDLGEVEPFIAIYPSPDQVCPVAERTGMRFDGCFIGACTTTEEDLVLAALVLEAGLKRGLTLEKGKRIVVPGSLPIVKNLRALGLLDIYKACGYEQPAPGCSLCLGIGADVAEAGSQWLSSQNRNFQNRMGRGAVGHICSAATVAASSFNMTLTDPCDLLNDVSETTFKEYLARCKVARGGSESKLAGGKQANNVQYIEPCLLGENARSAEGEVPALEAAAVSLDDARLGSINSRIYKLDDYVDTDALPQIIPAPACVGSPTDEMLGSHCFELTNPDFRDYVRSGHRVIVGGRAFGCGSSREEAPRALKGLGVQCVIARSFAFIFGRNMPNIGMLAIVLTDEAFYKAAQQGENIEVDVEGRVVHVAGQTFPFSLDDMELQLIRNRGLAASYQKLGSKVFAALCQKPAPLPISALADATLAQGGSIGRQMDW.

A substrate-binding site is contributed by 258–260 (DSH). Cys450, Cys513, and Cys516 together coordinate [4Fe-4S] cluster. Residues Arg536, Arg541, and 712–713 (SR) contribute to the substrate site.

This sequence belongs to the aconitase/IPM isomerase family.

It functions in the pathway mycotoxin biosynthesis. In terms of biological role, aconitase; part of the gene clusters that mediate the biosynthesis of AM-toxins, host-selective toxins (HSTs) causing Alternaria blotch on apple, a worldwide distributed disease. AM-toxins are cyclic depsipeptides containing the 3 residues 2-hydroxy-isovaleric acid (2-HIV), dehydroalanine, L-alanine which are common for all 3 AM-toxins I to III. The fourth precursor is L-alpha-amino-methoxyphenyl-valeric acid (L-Amv) for AM-toxin I, L-alpha-amino-phenyl-valeric acid (L-Apv) for AM-toxin II, and L-alpha-amino-hydroxyphenyl-valeric acid (L-Ahv) for AM-toxin III. AM-toxins have two target sites for affecting susceptible apple cells; they cause invagination of the plasma membrane and electrolyte loss and chloroplast disorganization. The non-ribosomal peptide synthetase AMT1 contains 4 catalytic modules and is responsible for activation of each residue in AM-toxin. The aldo-keto reductase AMT2 catalyzes the conversion of 2-keto-isovaleric acid (2-KIV) to 2-hydroxy-isovaleric acid (2-HIV), one of the precursor residues incorporated by AMT1 during AM-toxin biosynthesis, by reduction of its ketone to an alcohol. The cytochrome P450 monooxygenase AMT3 and the thioesterase AMT4 are also important for AM-toxin production, but their exact function within the AM-toxin biosynthesis are not known yet. Up to 21 proteins (including AMT1 to AMT4) are predicted to be involved in AM-toxin biosynthesis since their expression ishighly up-regulated in AM-toxin-producing cultures. The sequence is that of Aconitase AMT8-2 from Alternaria alternata (Alternaria rot fungus).